Reading from the N-terminus, the 190-residue chain is 3-isopropylmalate dehydratase small subunit (190 aa).

It belongs to the LeuD family. LeuD type 1 subfamily. As to quaternary structure, heterodimer of LeuC and LeuD.

The catalysed reaction is (2R,3S)-3-isopropylmalate = (2S)-2-isopropylmalate. The protein operates within amino-acid biosynthesis; L-leucine biosynthesis; L-leucine from 3-methyl-2-oxobutanoate: step 2/4. In terms of biological role, catalyzes the isomerization between 2-isopropylmalate and 3-isopropylmalate, via the formation of 2-isopropylmaleate. This is 3-isopropylmalate dehydratase small subunit from Staphylococcus aureus (strain MRSA252).